The chain runs to 570 residues: Proline--tRNA ligase (570 aa).

Belongs to the class-II aminoacyl-tRNA synthetase family. ProS type 1 subfamily. As to quaternary structure, homodimer.

Its subcellular location is the cytoplasm. The enzyme catalyses tRNA(Pro) + L-proline + ATP = L-prolyl-tRNA(Pro) + AMP + diphosphate. Functionally, catalyzes the attachment of proline to tRNA(Pro) in a two-step reaction: proline is first activated by ATP to form Pro-AMP and then transferred to the acceptor end of tRNA(Pro). As ProRS can inadvertently accommodate and process non-cognate amino acids such as alanine and cysteine, to avoid such errors it has two additional distinct editing activities against alanine. One activity is designated as 'pretransfer' editing and involves the tRNA(Pro)-independent hydrolysis of activated Ala-AMP. The other activity is designated 'posttransfer' editing and involves deacylation of mischarged Ala-tRNA(Pro). The misacylated Cys-tRNA(Pro) is not edited by ProRS. The chain is Proline--tRNA ligase from Shewanella sp. (strain ANA-3).